The sequence spans 430 residues: Serine--tRNA ligase (430 aa).

Residue 236–238 (TAE) participates in L-serine binding. Residue 267-269 (RSE) coordinates ATP. Glu290 contributes to the L-serine binding site. 354–357 (EISS) provides a ligand contact to ATP. Ser390 provides a ligand contact to L-serine.

It belongs to the class-II aminoacyl-tRNA synthetase family. Type-1 seryl-tRNA synthetase subfamily. Homodimer. The tRNA molecule binds across the dimer.

Its subcellular location is the cytoplasm. It catalyses the reaction tRNA(Ser) + L-serine + ATP = L-seryl-tRNA(Ser) + AMP + diphosphate + H(+). The catalysed reaction is tRNA(Sec) + L-serine + ATP = L-seryl-tRNA(Sec) + AMP + diphosphate + H(+). It participates in aminoacyl-tRNA biosynthesis; selenocysteinyl-tRNA(Sec) biosynthesis; L-seryl-tRNA(Sec) from L-serine and tRNA(Sec): step 1/1. In terms of biological role, catalyzes the attachment of serine to tRNA(Ser). Is also able to aminoacylate tRNA(Sec) with serine, to form the misacylated tRNA L-seryl-tRNA(Sec), which will be further converted into selenocysteinyl-tRNA(Sec). The chain is Serine--tRNA ligase from Idiomarina loihiensis (strain ATCC BAA-735 / DSM 15497 / L2-TR).